The chain runs to 426 residues: MASMSFALNRFSGLSSKTTLSADFDPSSRRSFLPPTRVGLKISSAAESEPDLSVTVNGLKMPNPFVIGSGPPGTNYTVMKRAFDEGWGAVIAKTVSLDASKVINVTPRYARLRTGSNGSAKTDVIGWQNIELISDRPLETMLKEFERLKKEYPDRILIASVMEEYNKTAWEELIDRVEQTGVDALEINFSCPHGMPERRMGAAVGQDCALLDEVCGWINAKATVPVWAKMTPNITDITEPARVSLKSGCEGIAAINTIMSVMGIDMKTLRPEPCVEGYSTPGGYSYKAVRPIALAKVMNIAKMMKSEFSEDRSLSGIGGVETGYDAAEFILLGSNTVQVCTGVMMHGYGHVKTLCAELKDFMKQHNFSTIEEFRGHSLQYFTTHTDLVKRQKEAVEQRKAEKRGLKSDKDWTGDGFVKETESMVSN.

The N-terminal 44 residues, Met1–Ser44, are a transit peptide targeting the chloroplast. Ala45 carries the post-translational modification N-acetylalanine. Residues Asn129 and Asn188–Ser190 each bind substrate. Cys191 (nucleophile) is an active-site residue. Position 256–257 (Asn256–Thr257) interacts with substrate. The tract at residues Val395–Asp414 is disordered.

This sequence belongs to the dihydropyrimidine dehydrogenase family. In terms of tissue distribution, expressed in roots, leaves, stems, siliques and flowers. Highly expressed ion dry seeds.

The protein localises to the plastid. The protein resides in the chloroplast. The catalysed reaction is 5,6-dihydrouracil + NADP(+) = uracil + NADPH + H(+). It participates in amino-acid biosynthesis; beta-alanine biosynthesis. Functionally, involved in pyrimidine base degradation. Catalyzes the reduction of uracil to 5,6-dihydrouracil (DHU) by using NADH as a specific cosubstrate and the reduction of thymine to 5,6-dihydrothymine (DHT). Involved in the recycling of nitrogen from nucleobases to general nitrogen metabolism. The protein is Dihydropyrimidine dehydrogenase (NADP(+)), chloroplastic of Arabidopsis thaliana (Mouse-ear cress).